Reading from the N-terminus, the 88-residue chain is Small ribosomal subunit protein uS15c (88 aa).

This sequence belongs to the universal ribosomal protein uS15 family. In terms of assembly, part of the 30S ribosomal subunit.

The protein localises to the plastid. Its subcellular location is the chloroplast. The polypeptide is Small ribosomal subunit protein uS15c (rps15) (Crucihimalaya wallichii (Rock-cress)).